The following is a 439-amino-acid chain: Fibroleukin (439 aa).

The N-terminal stretch at 1 to 23 is a signal peptide; that stretch reads MKLANWYWLSSAVLATYGFLVVA. Asparagine 25 carries N-linked (GlcNAc...) asparagine glycosylation. Positions 73–165 form a coiled coil; sequence SRIEEVFKEV…GRLEKLNLVN (93 aa). A disordered region spans residues 103–126; that stretch reads ADDNGDPGRNGLLLPSTGAPGEVG. 4 N-linked (GlcNAc...) asparagine glycosylation sites follow: asparagine 179, asparagine 235, asparagine 263, and asparagine 336. The Fibrinogen C-terminal domain maps to 204-436; it reads PVQHLIYKDC…EAKMMIRPKH (233 aa). Cysteine 213 and cysteine 242 are oxidised to a cystine. An intrachain disulfide couples cysteine 371 to cysteine 384.

As to quaternary structure, homotetramer; disulfide-linked. In terms of tissue distribution, constitutively expressed in cytotoxic T-cells.

It localises to the secreted. May play a role in physiologic lymphocyte functions at mucosal sites. The chain is Fibroleukin (FGL2) from Homo sapiens (Human).